The following is a 728-amino-acid chain: 1,4-alpha-glucan branching enzyme GlgB (728 aa).

Residue D405 is the Nucleophile of the active site. The active-site Proton donor is the E458.

This sequence belongs to the glycosyl hydrolase 13 family. GlgB subfamily. In terms of assembly, monomer.

It catalyses the reaction Transfers a segment of a (1-&gt;4)-alpha-D-glucan chain to a primary hydroxy group in a similar glucan chain.. The protein operates within glycan biosynthesis; glycogen biosynthesis. In terms of biological role, catalyzes the formation of the alpha-1,6-glucosidic linkages in glycogen by scission of a 1,4-alpha-linked oligosaccharide from growing alpha-1,4-glucan chains and the subsequent attachment of the oligosaccharide to the alpha-1,6 position. This Salmonella arizonae (strain ATCC BAA-731 / CDC346-86 / RSK2980) protein is 1,4-alpha-glucan branching enzyme GlgB.